The sequence spans 837 residues: Protein translocase subunit SecA 1 (837 aa).

Residues Q85, G103–T107, and D492 each bind ATP. The span at Q787 to R806 shows a compositional bias: basic and acidic residues. Residues Q787–K811 are disordered. The Zn(2+) site is built by C821, C823, C832, and C833.

The protein belongs to the SecA family. As to quaternary structure, monomer and homodimer. Part of the essential Sec protein translocation apparatus which comprises SecA, SecYEG and auxiliary proteins SecDF. Other proteins may also be involved. Zn(2+) is required as a cofactor.

Its subcellular location is the cell membrane. The protein resides in the cytoplasm. The catalysed reaction is ATP + H2O + cellular proteinSide 1 = ADP + phosphate + cellular proteinSide 2.. In terms of biological role, part of the Sec protein translocase complex. Interacts with the SecYEG preprotein conducting channel. Has a central role in coupling the hydrolysis of ATP to the transfer of proteins into and across the cell membrane, serving as an ATP-driven molecular motor driving the stepwise translocation of polypeptide chains across the membrane. The protein is Protein translocase subunit SecA 1 of Geobacillus kaustophilus (strain HTA426).